A 205-amino-acid chain; its full sequence is Large ribosomal subunit protein uL4 (205 aa).

The protein belongs to the universal ribosomal protein uL4 family. As to quaternary structure, part of the 50S ribosomal subunit.

One of the primary rRNA binding proteins, this protein initially binds near the 5'-end of the 23S rRNA. It is important during the early stages of 50S assembly. It makes multiple contacts with different domains of the 23S rRNA in the assembled 50S subunit and ribosome. Its function is as follows. Forms part of the polypeptide exit tunnel. The protein is Large ribosomal subunit protein uL4 of Roseobacter denitrificans (strain ATCC 33942 / OCh 114) (Erythrobacter sp. (strain OCh 114)).